A 221-amino-acid chain; its full sequence is Epididymal secretory glutathione peroxidase (221 aa).

A signal peptide spans 1–21; that stretch reads MTAWLGASYVLPILLVSFVQT. Cys-73 is an active-site residue.

Belongs to the glutathione peroxidase family. As to expression, epididymis.

The protein localises to the secreted. It catalyses the reaction 2 glutathione + H2O2 = glutathione disulfide + 2 H2O. In terms of biological role, protects cells and enzymes from oxidative damage, by catalyzing the reduction of hydrogen peroxide, lipid peroxides and organic hydroperoxide, by glutathione. May constitute a glutathione peroxidase-like protective system against peroxide damage in sperm membrane lipids. The protein is Epididymal secretory glutathione peroxidase (GPX5) of Canis lupus familiaris (Dog).